A 380-amino-acid polypeptide reads, in one-letter code: MALNLRKNHPLLKIVNDSLIDLPTPSNISTWWNFGSLLGICLVTQIVTGLLLAMHYTADTSLAFTSVAHTCRNVQFGWLIRNLHANGASFFFICIYLHIGRGLYYGSYLNKETWNVGVILLLTLMATAFVGYVLPWGQMSFWGATVITNLFSAIPYIGQTLVEWAWGGFSVDNPTLTRFFALHFLLPFVIAGLTLVHLTFLHETGSNNPLGIPSDCDKIPFHPYYSIKDILGFALMLASLVALALFSPNLLGDPENFTPANPLATPPHIKPEWYFLFAYAILRSIPNKLGGVLALAASILVLFLMPLLHTSKQRSMTFRPLSQILFWVLVTNVLILTWIGSQPVEQPFIIIGQLASLSYFTIILVLFPIAGVLENKMLKL.

Helical transmembrane passes span 34 to 54 (FGSLLGICLVTQIVTGLLLAM), 78 to 99 (WLIRNLHANGASFFFICIYLHI), 114 to 134 (WNVGVILLLTLMATAFVGYVL), and 179 to 199 (FFALHFLLPFVIAGLTLVHLT). Residues His-84 and His-98 each coordinate heme b. Heme b is bound by residues His-183 and His-197. His-202 contacts a ubiquinone. Helical transmembrane passes span 227 to 247 (IKDILGFALMLASLVALALFS), 289 to 309 (LGGVLALAASILVLFLMPLLH), 321 to 341 (LSQILFWVLVTNVLILTWIGS), and 348 to 368 (FIIIGQLASLSYFTIILVLFP).

Belongs to the cytochrome b family. As to quaternary structure, the cytochrome bc1 complex contains 11 subunits: 3 respiratory subunits (MT-CYB, CYC1 and UQCRFS1), 2 core proteins (UQCRC1 and UQCRC2) and 6 low-molecular weight proteins (UQCRH/QCR6, UQCRB/QCR7, UQCRQ/QCR8, UQCR10/QCR9, UQCR11/QCR10 and a cleavage product of UQCRFS1). This cytochrome bc1 complex then forms a dimer. Heme b is required as a cofactor.

It localises to the mitochondrion inner membrane. Its function is as follows. Component of the ubiquinol-cytochrome c reductase complex (complex III or cytochrome b-c1 complex) that is part of the mitochondrial respiratory chain. The b-c1 complex mediates electron transfer from ubiquinol to cytochrome c. Contributes to the generation of a proton gradient across the mitochondrial membrane that is then used for ATP synthesis. This is Cytochrome b (MT-CYB) from Vireo olivaceus (Red-eyed vireo).